A 246-amino-acid chain; its full sequence is Acetoacetate decarboxylase (246 aa).

The active-site Schiff-base intermediate with acetoacetate is Lys-116.

This sequence belongs to the ADC family. As to quaternary structure, homododecamer.

The enzyme catalyses acetoacetate + H(+) = acetone + CO2. Functionally, catalyzes the conversion of acetoacetate to acetone and carbon dioxide. The polypeptide is Acetoacetate decarboxylase (Chromobacterium violaceum (strain ATCC 12472 / DSM 30191 / JCM 1249 / CCUG 213 / NBRC 12614 / NCIMB 9131 / NCTC 9757 / MK)).